Here is a 446-residue protein sequence, read N- to C-terminus: tRNA modification GTPase MnmE (446 aa).

(6S)-5-formyl-5,6,7,8-tetrahydrofolate contacts are provided by R22, E80, and K119. Residues 215-370 (GLSLVIAGRP…LKKVIKQVVG (156 aa)) enclose the TrmE-type G domain. N225 provides a ligand contact to K(+). Residues 225–230 (NAGKST), 244–250 (TEIAGTT), and 269–272 (DTAG) each bind GTP. S229 lines the Mg(2+) pocket. K(+) contacts are provided by T244, I246, and T249. T250 is a Mg(2+) binding site. K446 is a binding site for (6S)-5-formyl-5,6,7,8-tetrahydrofolate.

Belongs to the TRAFAC class TrmE-Era-EngA-EngB-Septin-like GTPase superfamily. TrmE GTPase family. Homodimer. Heterotetramer of two MnmE and two MnmG subunits. Requires K(+) as cofactor.

The protein resides in the cytoplasm. Its function is as follows. Exhibits a very high intrinsic GTPase hydrolysis rate. Involved in the addition of a carboxymethylaminomethyl (cmnm) group at the wobble position (U34) of certain tRNAs, forming tRNA-cmnm(5)s(2)U34. This Legionella pneumophila subsp. pneumophila (strain Philadelphia 1 / ATCC 33152 / DSM 7513) protein is tRNA modification GTPase MnmE.